The following is a 421-amino-acid chain: UDP-N-acetylglucosamine 1-carboxyvinyltransferase (421 aa).

Residue 24–25 (KN) participates in phosphoenolpyruvate binding. Arginine 93 serves as a coordination point for UDP-N-acetyl-alpha-D-glucosamine. The active-site Proton donor is the cysteine 117. Position 117 is a 2-(S-cysteinyl)pyruvic acid O-phosphothioketal (cysteine 117). Positions 307 and 329 each coordinate UDP-N-acetyl-alpha-D-glucosamine.

The protein belongs to the EPSP synthase family. MurA subfamily.

The protein resides in the cytoplasm. It carries out the reaction phosphoenolpyruvate + UDP-N-acetyl-alpha-D-glucosamine = UDP-N-acetyl-3-O-(1-carboxyvinyl)-alpha-D-glucosamine + phosphate. It participates in cell wall biogenesis; peptidoglycan biosynthesis. Cell wall formation. Adds enolpyruvyl to UDP-N-acetylglucosamine. This Blochmanniella pennsylvanica (strain BPEN) protein is UDP-N-acetylglucosamine 1-carboxyvinyltransferase.